The chain runs to 257 residues: Nickel import system ATP-binding protein NikD (257 aa).

The region spanning 4–245 is the ABC transporter domain; sequence IDIQNLTIKN…HLHPYTEQLI (242 aa). 37 to 44 provides a ligand contact to ATP; it reads GESGAGKS.

The protein belongs to the ABC transporter superfamily. As to quaternary structure, the complex is composed of two ATP-binding proteins (NikD and NikE), two transmembrane proteins (NikB and NikC) and a solute-binding protein (NikA).

The protein localises to the cell membrane. The catalysed reaction is Ni(2+)(out) + ATP + H2O = Ni(2+)(in) + ADP + phosphate + H(+). Functionally, part of the ABC transporter complex NikABCDE (Opp2) involved in nickel import. Probably responsible for energy coupling to the transport system. The polypeptide is Nickel import system ATP-binding protein NikD (Staphylococcus aureus (strain bovine RF122 / ET3-1)).